The following is a 204-amino-acid chain: Elongation factor Ts (204 aa).

An involved in Mg(2+) ion dislocation from EF-Tu region spans residues 80–83 (TDFV).

The protein belongs to the EF-Ts family.

It localises to the cytoplasm. In terms of biological role, associates with the EF-Tu.GDP complex and induces the exchange of GDP to GTP. It remains bound to the aminoacyl-tRNA.EF-Tu.GTP complex up to the GTP hydrolysis stage on the ribosome. The protein is Elongation factor Ts of Caldicellulosiruptor bescii (strain ATCC BAA-1888 / DSM 6725 / KCTC 15123 / Z-1320) (Anaerocellum thermophilum).